We begin with the raw amino-acid sequence, 1178 residues long: DNA-directed RNA polymerase subunit beta (1178 aa).

The protein belongs to the RNA polymerase beta chain family. As to quaternary structure, the RNAP catalytic core consists of 2 alpha, 1 beta, 1 beta' and 1 omega subunit. When a sigma factor is associated with the core the holoenzyme is formed, which can initiate transcription.

The catalysed reaction is RNA(n) + a ribonucleoside 5'-triphosphate = RNA(n+1) + diphosphate. DNA-dependent RNA polymerase catalyzes the transcription of DNA into RNA using the four ribonucleoside triphosphates as substrates. This Treponema pallidum (strain Nichols) protein is DNA-directed RNA polymerase subunit beta.